The primary structure comprises 801 residues: Ferredoxin:CoB-CoM heterodisulfide reductase subunit A (801 aa).

149-172 contacts FAD; it reads GGGIAGITAALNLADNGVSTVLVE. 4Fe-4S ferredoxin-type domains lie at 239–269 and 285–320; these read KKPR…FNCG and PKIY…FSQK. C248, C251, C254, C258, C295, C303, C306, and C310 together coordinate [4Fe-4S] cluster. The segment at 382–409 is disordered; the sequence is FSKASSDPTPATCDSRCEDSSDESQGTD. 4Fe-4S ferredoxin-type domains are found at residues 606–634 and 635–664; these read EIAT…VNES and GRVV…IAGF. [4Fe-4S] cluster-binding residues include C615, C618, C621, C624, C644, C647, C650, and C654.

The protein belongs to the HdrA family. As to quaternary structure, the ferredoxin:CoB-CoM heterodisulfide reductase is composed of three subunits; HdrA1, HdrB1 and HdrC1. [4Fe-4S] cluster serves as cofactor. Requires FAD as cofactor.

The protein resides in the cytoplasm. The catalysed reaction is coenzyme B + coenzyme M + 2 oxidized [2Fe-2S]-[ferredoxin] = coenzyme M-coenzyme B heterodisulfide + 2 reduced [2Fe-2S]-[ferredoxin] + 2 H(+). The protein operates within cofactor metabolism; coenzyme M-coenzyme B heterodisulfide reduction; coenzyme B and coenzyme M from coenzyme M-coenzyme B heterodisulfide: step 1/1. Its function is as follows. Part of a complex that catalyzes the reversible reduction of CoM-S-S-CoB to the thiol-coenzymes H-S-CoM (coenzyme M) and H-S-CoB (coenzyme B). Probably involved in methylotrophic methanogenesis but not in aceticlastic methanogenesis. The protein is Ferredoxin:CoB-CoM heterodisulfide reductase subunit A of Methanosarcina acetivorans (strain ATCC 35395 / DSM 2834 / JCM 12185 / C2A).